A 157-amino-acid polypeptide reads, in one-letter code: uncharacterized protein (157 aa).

The region spanning 9-154 (LLINYKTLDE…ETNSNAITNE (146 aa)) is the N-acetyltransferase domain.

This is an uncharacterized protein from Bacillus mycoides (strain KBAB4) (Bacillus weihenstephanensis).